Reading from the N-terminus, the 583-residue chain is Pescadillo (583 aa).

A coiled-coil region spans residues Glu275 to Glu329. The 94-residue stretch at Lys323–Leu416 folds into the BRCT domain. 2 disordered regions span residues Arg448–Ala526 and Ala558–Cys583. The span at Glu455–Asn489 shows a compositional bias: acidic residues. A compositionally biased stretch (basic and acidic residues) spans Ala512–Ala526.

The protein belongs to the pescadillo family. In terms of assembly, component of the PeBoW complex, composed of bop1, pes1 and wdr12. The complex is held together by bop1, which interacts with pes1 via its N-terminal domain and with wdr12 via a high-affinity interaction between the seven-bladed beta-propeller domains of the 2 proteins. The PeBoW complex associates with the 66S pre-ribosome.

The protein resides in the nucleus. It localises to the nucleolus. The protein localises to the nucleoplasm. Component of the PeBoW complex, which is required for maturation of 28S and 5.8S ribosomal RNAs and formation of the 60S ribosome. This Danio rerio (Zebrafish) protein is Pescadillo (pes).